A 103-amino-acid chain; its full sequence is Small ribosomal subunit protein uS10 (103 aa).

Belongs to the universal ribosomal protein uS10 family. In terms of assembly, part of the 30S ribosomal subunit.

Functionally, involved in the binding of tRNA to the ribosomes. In Chlorobaculum tepidum (strain ATCC 49652 / DSM 12025 / NBRC 103806 / TLS) (Chlorobium tepidum), this protein is Small ribosomal subunit protein uS10.